Reading from the N-terminus, the 509-residue chain is Bifunctional purine biosynthesis protein PurH (509 aa).

One can recognise an MGS-like domain in the interval 1 to 144 (MKRALISVSD…KNYAAVTVVV (144 aa)).

This sequence belongs to the PurH family.

The enzyme catalyses (6R)-10-formyltetrahydrofolate + 5-amino-1-(5-phospho-beta-D-ribosyl)imidazole-4-carboxamide = 5-formamido-1-(5-phospho-D-ribosyl)imidazole-4-carboxamide + (6S)-5,6,7,8-tetrahydrofolate. The catalysed reaction is IMP + H2O = 5-formamido-1-(5-phospho-D-ribosyl)imidazole-4-carboxamide. The protein operates within purine metabolism; IMP biosynthesis via de novo pathway; 5-formamido-1-(5-phospho-D-ribosyl)imidazole-4-carboxamide from 5-amino-1-(5-phospho-D-ribosyl)imidazole-4-carboxamide (10-formyl THF route): step 1/1. It participates in purine metabolism; IMP biosynthesis via de novo pathway; IMP from 5-formamido-1-(5-phospho-D-ribosyl)imidazole-4-carboxamide: step 1/1. The protein is Bifunctional purine biosynthesis protein PurH of Listeria monocytogenes serotype 4b (strain F2365).